Here is a 305-residue protein sequence, read N- to C-terminus: Acetaldehyde dehydrogenase (305 aa).

13–16 (SGNI) contacts NAD(+). Residue C128 is the Acyl-thioester intermediate of the active site. Residues 159-167 (SAGPGTRQN) and N278 each bind NAD(+).

The protein belongs to the acetaldehyde dehydrogenase family.

It catalyses the reaction acetaldehyde + NAD(+) + CoA = acetyl-CoA + NADH + H(+). This is Acetaldehyde dehydrogenase from Roseiflexus castenholzii (strain DSM 13941 / HLO8).